Reading from the N-terminus, the 81-residue chain is MQSLEILAIVALVVAAILAIVVWTIVGIEIRKTLRQKKIDRLIDRIRERAEDSGNESDGDEEELSALVEMGHHAPWDVDDL.

The Extracellular portion of the chain corresponds to 1–7 (MQSLEIL). Residues 8 to 28 (AIVALVVAAILAIVVWTIVGI) traverse the membrane as a helical segment. The Cytoplasmic portion of the chain corresponds to 29–81 (EIRKTLRQKKIDRLIDRIRERAEDSGNESDGDEEELSALVEMGHHAPWDVDDL). The segment at 50–81 (AEDSGNESDGDEEELSALVEMGHHAPWDVDDL) is disordered. S53 and S57 each carry phosphoserine; by host CK2. Over residues 53–64 (SGNESDGDEEEL) the composition is skewed to acidic residues. Residues 70–81 (MGHHAPWDVDDL) show a composition bias toward basic and acidic residues.

Belongs to the HIV-1 VPU protein family. As to quaternary structure, homopentamer. Interacts with host CD4 and BRTC; these interactions induce proteasomal degradation of CD4. Interacts with host BST2; this interaction leads to the degradation of host BST2. Interacts with host FBXW11. Interacts with host AP1M1; this interaction plays a role in the mistrafficking and subsequent degradation of host BST2. Interacts with host RANBP2; this interaction allows Vpu to down-regulate host BLM sumoylation. Phosphorylated by host CK2. This phosphorylation is necessary for interaction with human BTRC and degradation of CD4.

The protein localises to the host membrane. Ion channel activity is inhibited by hexamethylene amiloride in vitro. Its function is as follows. Enhances virion budding by targeting host CD4 and Tetherin/BST2 to proteasome degradation. Degradation of CD4 prevents any unwanted premature interactions between viral Env and its host receptor CD4 in the endoplasmic reticulum. Degradation of antiretroviral protein Tetherin/BST2 is important for virion budding, as BST2 tethers new viral particles to the host cell membrane. Mechanistically, Vpu bridges either CD4 or BST2 to BTRC, a substrate recognition subunit of the Skp1/Cullin/F-box protein E3 ubiquitin ligase, induces their ubiquitination and subsequent proteasomal degradation. The alteration of the E3 ligase specificity by Vpu seems to promote the degradation of host IKBKB, leading to NF-kappa-B down-regulation and subsequent apoptosis. Acts as a viroporin that forms an oligomeric ion channel in membranes. Modulates the host DNA repair mechanisms to promote degradation of nuclear viral cDNA in cells that are already productively infected in order to suppress immune sensing and proviral hyper-integration (superinfection). Manipulates PML-NBs and modulates SUMOylation of host BLM protein thereby enhancing its DNA-end processing activity toward viral unintegrated linear DNA. Also inhibits RAD52-mediated homologous repair of viral cDNA, preventing the generation of dead-end circular forms of single copies of the long terminal repeat and permitting sustained nucleolytic attack. In Homo sapiens (Human), this protein is Protein Vpu.